Here is a 503-residue protein sequence, read N- to C-terminus: AMP phosphorylase (503 aa).

Residues G168, 194 to 199, and T203 each bind AMP; that span reads SRAITS. Residue D256 is the Proton donor of the active site. Positions 264 and 288 each coordinate AMP.

It belongs to the thymidine/pyrimidine-nucleoside phosphorylase family. Type 2 subfamily.

The enzyme catalyses AMP + phosphate = alpha-D-ribose 1,5-bisphosphate + adenine. It carries out the reaction CMP + phosphate = cytosine + alpha-D-ribose 1,5-bisphosphate. It catalyses the reaction UMP + phosphate = alpha-D-ribose 1,5-bisphosphate + uracil. Its function is as follows. Catalyzes the conversion of AMP and phosphate to adenine and ribose 1,5-bisphosphate (R15P). Exhibits phosphorylase activity toward CMP and UMP in addition to AMP. Functions in an archaeal AMP degradation pathway, together with R15P isomerase and RubisCO. The protein is AMP phosphorylase of Pyrococcus horikoshii (strain ATCC 700860 / DSM 12428 / JCM 9974 / NBRC 100139 / OT-3).